Reading from the N-terminus, the 735-residue chain is Protein argonaute (735 aa).

The interval 1–94 is N-terminal domain; that stretch reads MDLLSNLRRS…LVQMGTKQLD (94 aa). A linker L1 region spans residues 95–180; the sequence is CRNDAHRCAL…IDIHHRFYTP (86 aa). The segment at 181–284 is PAZ domain; that stretch reads WTVHQWLEQY…SPSLTMEMLA (104 aa). The segment at 285 to 369 is linker L2; it reads KVAEDSTVCD…SKTADIRNKG (85 aa). Residues 370-498 form a mid domain region; the sequence is CAKIGETSFG…LLCKAGWQPI (129 aa). The interval 499-735 is PIWI domain; it reads QLESVDHPEV…NISRDKLIAV (237 aa). Active-site residues include aspartate 516, glutamate 550, aspartate 584, and aspartate 709. Aspartate 516 serves as a coordination point for Mn(2+). Mn(2+) is bound by residues aspartate 584, aspartate 709, and valine 735.

This sequence belongs to the argonaute family. Long pAgo subfamily. Copurifies with SSB proteins Synpcc7942_0079 and Synpcc7942_0301 as well as other proteins. Mn(2+) is required as a cofactor.

Functionally, a DNA-guided ssDNA endonuclease that might play a role in defense against invading mobile genetic elements. Uses short ssDNA sequences as guides (gDNA) to bind complementary target strands, resulting in cleavage of the target DNA (tDNA). The cleavage site is 10 nucleotides (nt) downstream of the target residue base-paired with the 5'-end of the gDNA. Both 5'-P and 5'-OH gDNAs confer activity; a 5'-OH guide cleaves between nt 10-11 and nt 11-12. Guide DNA mismatches in the seed (nt 2-9) can enhance activity, mismatches 1-5 nt after the cleavage site block activity. Has no appreciable activity with guide RNA or on target RNA. In situ binds to 5'-phosphorylated DNA 14-20 nt in length; small DNA maps over the chromosome and plasmid with some preference for the replication origin and the probable termination site. Also has weak guide-independent nuclease activity on DNA called 'chopping'. Overexpression of wild-type or catalytically inactive mutant has no visible effect during growth under continuous high light for up to a month. In Synechococcus elongatus (strain ATCC 33912 / PCC 7942 / FACHB-805) (Anacystis nidulans R2), this protein is Protein argonaute.